We begin with the raw amino-acid sequence, 309 residues long: Anamorsin (309 aa).

The tract at residues 6 to 172 is N-terminal SAM-like domain; sequence ISPGQLVAVF…KPNFEVGSSS (167 aa). Positions 173–222 are linker; that stretch reads QLKLPNKKSSSVKPVVDPAAAKLWTLSANDMEDDSVDLIDSDELLDPEDL. 3 positions are modified to phosphoserine: S182, S183, and S213. Residues C235, C244, C247, and C249 each coordinate [2Fe-2S] cluster. The fe-S binding site A stretch occupies residues 235–249; it reads CGEGKKRKACKNCTC. S269 carries the phosphoserine modification. [4Fe-4S] cluster contacts are provided by C271, C274, C282, and C285. 2 consecutive short sequence motifs (cx2C motif) follow at residues 271–274 and 282–285; these read CGNC and CANC. Residues 271–285 form a fe-S binding site B region; it reads CGNCYLGDAFRCANC. Phosphoserine occurs at positions 302 and 304.

Belongs to the anamorsin family. As to quaternary structure, monomer. Interacts with NDOR1. Interacts with CHCHD4. Requires [2Fe-2S] cluster as cofactor. It depends on [4Fe-4S] cluster as a cofactor.

It is found in the cytoplasm. The protein resides in the nucleus. The protein localises to the mitochondrion intermembrane space. In terms of biological role, component of the cytosolic iron-sulfur (Fe-S) protein assembly (CIA) machinery required for the maturation of extramitochondrial Fe-S proteins. Part of an electron transfer chain functioning in an early step of cytosolic Fe-S biogenesis, facilitating the de novo assembly of a [4Fe-4S] cluster on the scaffold complex NUBP1-NUBP2. Electrons are transferred to CIAPIN1 from NADPH via the FAD- and FMN-containing protein NDOR1. NDOR1-CIAPIN1 are also required for the assembly of the diferric tyrosyl radical cofactor of ribonucleotide reductase (RNR), probably by providing electrons for reduction during radical cofactor maturation in the catalytic small subunit. Has anti-apoptotic effects in the cell. Involved in negative control of cell death upon cytokine withdrawal. Promotes development of hematopoietic cells. In Mus musculus (Mouse), this protein is Anamorsin.